The chain runs to 188 residues: Peptidyl-tRNA hydrolase (188 aa).

TRNA is bound at residue Y14. H19 serves as the catalytic Proton acceptor. Y64, N66, and N112 together coordinate tRNA.

Belongs to the PTH family. Monomer.

The protein resides in the cytoplasm. It carries out the reaction an N-acyl-L-alpha-aminoacyl-tRNA + H2O = an N-acyl-L-amino acid + a tRNA + H(+). In terms of biological role, hydrolyzes ribosome-free peptidyl-tRNAs (with 1 or more amino acids incorporated), which drop off the ribosome during protein synthesis, or as a result of ribosome stalling. Catalyzes the release of premature peptidyl moieties from peptidyl-tRNA molecules trapped in stalled 50S ribosomal subunits, and thus maintains levels of free tRNAs and 50S ribosomes. This chain is Peptidyl-tRNA hydrolase, found in Clostridium perfringens (strain SM101 / Type A).